Here is a 165-residue protein sequence, read N- to C-terminus: Small ribosomal subunit protein uS5 (165 aa).

Residues 10-73 form the S5 DRBM domain; the sequence is LVEKLVSVDR…EAAKRNMITV (64 aa).

This sequence belongs to the universal ribosomal protein uS5 family. In terms of assembly, part of the 30S ribosomal subunit. Contacts proteins S4 and S8.

In terms of biological role, with S4 and S12 plays an important role in translational accuracy. Located at the back of the 30S subunit body where it stabilizes the conformation of the head with respect to the body. In Psychrobacter sp. (strain PRwf-1), this protein is Small ribosomal subunit protein uS5.